Consider the following 344-residue polypeptide: Photosystem II protein D1 (344 aa).

3 helical membrane-spanning segments follow: residues 29-46 (YIGW…TATT), 118-133 (HFFI…EWEL), and 142-156 (WIAV…AATA). Histidine 118 lines the chlorophyll a pocket. Tyrosine 126 serves as a coordination point for pheophytin a. Positions 170 and 189 each coordinate [CaMn4O5] cluster. The helical transmembrane segment at 197 to 218 (FHMLGVAGVFGGSLFSAMHGSL) threads the bilayer. Histidine 198 provides a ligand contact to chlorophyll a. Residues histidine 215 and 264 to 265 (SF) contribute to the a quinone site. Histidine 215 provides a ligand contact to Fe cation. Histidine 272 is a binding site for Fe cation. Residues 274-288 (FLAAWPVIGIWFTAM) traverse the membrane as a helical segment. Residues histidine 332, glutamate 333, aspartate 342, and alanine 344 each coordinate [CaMn4O5] cluster.

Belongs to the reaction center PufL/M/PsbA/D family. As to quaternary structure, PSII is composed of 1 copy each of membrane proteins PsbA, PsbB, PsbC, PsbD, PsbE, PsbF, PsbH, PsbI, PsbJ, PsbK, PsbL, PsbM, PsbT, PsbY, PsbZ, Psb30/Ycf12, at least 3 peripheral proteins of the oxygen-evolving complex and a large number of cofactors. It forms dimeric complexes. The cofactor is The D1/D2 heterodimer binds P680, chlorophylls that are the primary electron donor of PSII, and subsequent electron acceptors. It shares a non-heme iron and each subunit binds pheophytin, quinone, additional chlorophylls, carotenoids and lipids. D1 provides most of the ligands for the Mn4-Ca-O5 cluster of the oxygen-evolving complex (OEC). There is also a Cl(-1) ion associated with D1 and D2, which is required for oxygen evolution. The PSII complex binds additional chlorophylls, carotenoids and specific lipids.. Post-translationally, tyr-161 forms a radical intermediate that is referred to as redox-active TyrZ, YZ or Y-Z.

It localises to the plastid. Its subcellular location is the chloroplast thylakoid membrane. The enzyme catalyses 2 a plastoquinone + 4 hnu + 2 H2O = 2 a plastoquinol + O2. Functionally, photosystem II (PSII) is a light-driven water:plastoquinone oxidoreductase that uses light energy to abstract electrons from H(2)O, generating O(2) and a proton gradient subsequently used for ATP formation. It consists of a core antenna complex that captures photons, and an electron transfer chain that converts photonic excitation into a charge separation. The D1/D2 (PsbA/PsbD) reaction center heterodimer binds P680, the primary electron donor of PSII as well as several subsequent electron acceptors. The sequence is that of Photosystem II protein D1 from Bigelowiella natans (Pedinomonas minutissima).